The following is a 271-amino-acid chain: tRNA (guanine-N(7)-)-methyltransferase (271 aa).

The disordered stretch occupies residues 1–52 (MSDSHHTPEAASASLRHVRAKGEPRFPDGPKADPAGSHFERRIRSFQPRRSR). The segment covering 20–31 (AKGEPRFPDGPK) has biased composition (basic and acidic residues). S-adenosyl-L-methionine is bound by residues glutamate 93, aspartate 118, aspartate 145, and aspartate 168. Residue aspartate 168 is part of the active site. Residues lysine 172, aspartate 204, and 241–244 (TRFE) contribute to the substrate site.

This sequence belongs to the class I-like SAM-binding methyltransferase superfamily. TrmB family.

It carries out the reaction guanosine(46) in tRNA + S-adenosyl-L-methionine = N(7)-methylguanosine(46) in tRNA + S-adenosyl-L-homocysteine. It functions in the pathway tRNA modification; N(7)-methylguanine-tRNA biosynthesis. Its function is as follows. Catalyzes the formation of N(7)-methylguanine at position 46 (m7G46) in tRNA. This is tRNA (guanine-N(7)-)-methyltransferase from Streptomyces coelicolor (strain ATCC BAA-471 / A3(2) / M145).